The sequence spans 110 residues: Protein RALF-like 19 (110 aa).

An N-terminal signal peptide occupies residues 1–23 (MGIKILLILGLLTLAVVAESANA). The propeptide at 24-58 (TWTLTKSCVNGQGCIGEDGELDYLMDSETNRRQLA) is removed in mature form. Cystine bridges form between Cys-76/Cys-86 and Cys-99/Cys-105.

The protein belongs to the plant rapid alkalinization factor (RALF) family. Post-translationally, proteolytically cleaved, probably by S1P, a subtilisin-like serine protease (subtilase).

Its subcellular location is the secreted. Its function is as follows. Cell signaling peptide that may regulate plant stress, growth, and development. Mediates a rapid alkalinization of extracellular space by mediating a transient increase in the cytoplasmic Ca(2+) concentration leading to a calcium-dependent signaling events through a cell surface receptor and a concomitant activation of some intracellular mitogen-activated protein kinases. In Arabidopsis thaliana (Mouse-ear cress), this protein is Protein RALF-like 19 (RALFL19).